Consider the following 462-residue polypeptide: Flavin-containing monooxygenase FMO GS-OX3 (462 aa).

17–22 (GAGPAG) lines the FAD pocket. NADP(+) is bound at residue 212–217 (GNFASG). Residues 318–338 (ALAPGLAFVGLPAMGIVFVMF) traverse the membrane as a helical segment.

Belongs to the FMO family.

It localises to the membrane. The enzyme catalyses a (Z)-omega-(methylsulfanyl)-N-sulfo-alkylhydroximate S-glucoside + NADPH + O2 + H(+) = a (Z)-omega-(methylsulfinyl)-alkyl-glucosinolate + NADP(+) + H2O. Catalyzes the conversion of methylthioalkyl glucosinolates of any chain length into methylsulfinylalkyl glucosinolates. Prefers probably short-chain methylthioalkyl glucosinolates in cv. Landsberg erecta. This is Flavin-containing monooxygenase FMO GS-OX3 (FMOGS-OX3) from Arabidopsis thaliana (Mouse-ear cress).